A 153-amino-acid chain; its full sequence is Ribonuclease K6 (153 aa).

A signal peptide spans 1 to 27 (MVVDLPRYLPLLLLLELWEPMYLLCSQ). The active-site Proton acceptor is the His-41. 4 disulfide bridges follow: Cys-49–Cys-107, Cys-63–Cys-117, Cys-81–Cys-132, and Cys-88–Cys-95. N-linked (GlcNAc...) asparagine glycosylation occurs at Asn-58. A substrate-binding site is contributed by 64 to 68 (KQINT). N-linked (GlcNAc...) asparagine glycosylation occurs at Asn-85. Lys-89 contacts substrate. Residue His-148 is the Proton donor of the active site.

This sequence belongs to the pancreatic ribonuclease family. Interacts (via N-terminus) with bacterial lipopolysaccharide (LPS). In terms of tissue distribution, highly expressed in spleen (at protein level). Has little or no expression in healthy kidneys (at protein level). Detected at high levels in infected kidneys (at protein level). Expressed at low levels in bladder. Also detected in skeletal muscle, heart and bone marrow.

It localises to the secreted. Its subcellular location is the lysosome. It is found in the cytoplasmic granule. Its function is as follows. Ribonuclease which shows a preference for the pyrimidines uridine and cytosine. Has potent antibacterial activity against a range of Gram-positive and Gram-negative bacteria, including P.aeruginosa, A.baumanii, M.luteus, S.aureus, E.faecalis, E.faecium, S.saprophyticus and E.coli. Causes loss of bacterial membrane integrity, and also promotes agglutination of Gram-negative bacteria. Probably contributes to urinary tract sterility. Bactericidal activity is independent of RNase activity. The sequence is that of Ribonuclease K6 (Rnase6) from Mus musculus (Mouse).